Here is a 534-residue protein sequence, read N- to C-terminus: Chaperonin GroEL (534 aa).

ATP contacts are provided by residues 29–32 (TAGP), 86–90 (DGTTT), glycine 413, and aspartate 494.

The protein belongs to the chaperonin (HSP60) family. As to quaternary structure, forms a cylinder of 14 subunits composed of two heptameric rings stacked back-to-back. Interacts with the co-chaperonin GroES.

It is found in the cytoplasm. It carries out the reaction ATP + H2O + a folded polypeptide = ADP + phosphate + an unfolded polypeptide.. In terms of biological role, together with its co-chaperonin GroES, plays an essential role in assisting protein folding. The GroEL-GroES system forms a nano-cage that allows encapsulation of the non-native substrate proteins and provides a physical environment optimized to promote and accelerate protein folding. The sequence is that of Chaperonin GroEL from Mycoplasmoides gallisepticum (strain R(low / passage 15 / clone 2)) (Mycoplasma gallisepticum).